Here is an 83-residue protein sequence, read N- to C-terminus: Cytochrome b559 subunit alpha (83 aa).

A helical transmembrane segment spans residues 21-35 (VIHSITIPSLFIAGW). A heme-binding site is contributed by H23.

The protein belongs to the PsbE/PsbF family. Heterodimer of an alpha subunit and a beta subunit. PSII is composed of 1 copy each of membrane proteins PsbA, PsbB, PsbC, PsbD, PsbE, PsbF, PsbH, PsbI, PsbJ, PsbK, PsbL, PsbM, PsbT, PsbX, PsbY, PsbZ, Psb30/Ycf12, at least 3 peripheral proteins of the oxygen-evolving complex and a large number of cofactors. It forms dimeric complexes. Requires heme b as cofactor.

The protein localises to the plastid. It is found in the chloroplast thylakoid membrane. This b-type cytochrome is tightly associated with the reaction center of photosystem II (PSII). PSII is a light-driven water:plastoquinone oxidoreductase that uses light energy to abstract electrons from H(2)O, generating O(2) and a proton gradient subsequently used for ATP formation. It consists of a core antenna complex that captures photons, and an electron transfer chain that converts photonic excitation into a charge separation. The chain is Cytochrome b559 subunit alpha from Amborella trichopoda.